Reading from the N-terminus, the 919-residue chain is MLX-interacting protein (919 aa).

The tract at residues 1–72 is disordered; it reads MAADVFMCSP…AGPGREEPPR (72 aa). Alanine 2 is modified (N-acetylalanine). Phosphoserine occurs at positions 9, 27, 33, and 39. The span at 27 to 37 shows a compositional bias: acidic residues; that stretch reads SEDDDDSDTDE. Over residues 44–56 the composition is skewed to low complexity; sequence SGAATPARAHASA. The required for cytoplasmic localization stretch occupies residues 73–327; that stretch reads RQQIIHSGHF…PLQPNLDFMD (255 aa). Residues 322–445 are transactivation domain; sequence NLDFMDTFEP…LLSPSPAPPP (124 aa). Disordered regions lie at residues 542-562 and 633-712; these read KPVSLTGGRPKQPHKIVPAPK and DLGH…SDPK. Residue serine 669 is modified to Phosphoserine. The segment covering 670 to 685 has biased composition (polar residues); the sequence is PQVTVTGPSRDCPNSG. The segment covering 686-706 has biased composition (low complexity); that stretch reads QASPCASEQSPSPQSPQNNCS. A bHLH domain is found at 719–769; the sequence is NRQMKHISAEQKRRFNIKMCFDMLNSLISNNSKLTSHAITLQKTVEYITKL. A leucine-zipper region spans residues 769 to 790; it reads LQQERGQMQEEARRLREEIEEL. A mediates heterotypic interactions between MLXIP and MLX and is required for cytoplasmic localization region spans residues 832–881; the sequence is WKFWIFSIIIKPLFESFKGMVSTSSLEELHRTALSWLDQHCSLPILRPMV.

Efficient DNA binding requires dimerization with another bHLH protein. Binds DNA as a homodimer or a heterodimer with MLX. As to expression, widely expressed in adult tissues. Most abundant in skeletal muscle.

The protein localises to the cytoplasm. It localises to the nucleus. The protein resides in the mitochondrion outer membrane. Binds DNA as a heterodimer with MLX and activates transcription. Binds to the canonical E box sequence 5'-CACGTG-3'. Plays a role in transcriptional activation of glycolytic target genes. Involved in glucose-responsive gene regulation. The chain is MLX-interacting protein from Homo sapiens (Human).